Here is a 673-residue protein sequence, read N- to C-terminus: Armadillo repeat-containing protein 8 (673 aa).

A2 is subject to N-acetylalanine. 14 ARM repeats span residues 51–92 (NKQK…SLAM), 95–134 (ENNVKSLLDCHIIPALLQGLLSPDLKFIEACLRCLRTIFT), 138–176 (TPEELLYTDATVIPHLMALLSRSRYTQEYICQIFSHCCK), 178–217 (PDHQTILFNHGAVQNIAHLLTSPSYKVRMQALKCFSVLAF), 224–265 (MTLV…YMCR), 269–309 (IRTD…YLIE), 313–352 (ELQRIASITDHLIAMLADYFKYPSSVSAITDIKRLDHDLK), 374–413 (DIRKKIIETETMMDRIVTGSSESSVKVRLAAVRCLHSLSR), 416–455 (QQLRTSFQDHAVWKPLMKVLQNAPDEILVVASSMLCNLLL), 458–497 (SPSKEPILESGAVELLCGLTQSENPALRVNGIWALMNMAF), 501–540 (QKIKADILRSLSTEQLFRLLSDSDMNVLMKTLGLLRNLLS), 543–585 (PHID…NIAD), 588–627 (TAKELIMTNDDILQKIKYYMGHSHVKLQLAAMFCISNLTW), and 634–673 (QERQDKLRDMGIVDILHKLSQSADSNLCDKAKTALQQYLA). Phosphoserine is present on S337. S512 bears the Phosphoserine mark.

In terms of assembly, identified in the CTLH complex that contains GID4, RANBP9 and/or RANBP10, MKLN1, MAEA, RMND5A (or alternatively its paralog RMND5B), GID8, ARMC8, WDR26 and YPEL5. Within this complex, MAEA, RMND5A (or alternatively its paralog RMND5B), GID8, WDR26, and RANBP9 and/or RANBP10 form the catalytic core, while GID4, MKLN1, ARMC8 and YPEL5 have ancillary roles.

The protein resides in the nucleus. It is found in the cytoplasm. In terms of biological role, component of the CTLH E3 ubiquitin-protein ligase complex that selectively accepts ubiquitin from UBE2H and mediates ubiquitination and subsequent proteasomal degradation of the transcription factor HBP1. The polypeptide is Armadillo repeat-containing protein 8 (Armc8) (Mus musculus (Mouse)).